The sequence spans 97 residues: YcgL domain-containing protein Pmen_1774 (97 aa).

Residues 3–87 (RICSIYKSPR…PEEDYIQHLP (85 aa)) form the YcgL domain.

The sequence is that of YcgL domain-containing protein Pmen_1774 from Ectopseudomonas mendocina (strain ymp) (Pseudomonas mendocina).